The primary structure comprises 36 residues: Potassium channel toxin alpha-KTx 16.1 (36 aa).

Disulfide bonds link cysteine 7/cysteine 28, cysteine 13/cysteine 33, and cysteine 17/cysteine 35.

This sequence belongs to the short scorpion toxin superfamily. Potassium channel inhibitor family. Alpha-KTx 16 subfamily. In terms of tissue distribution, expressed by the venom gland.

Its subcellular location is the secreted. Blocks calcium-activated potassium channels. The chain is Potassium channel toxin alpha-KTx 16.1 from Hottentotta tamulus (Eastern Indian scorpion).